We begin with the raw amino-acid sequence, 288 residues long: MNEIVITDTDFCRFRDYFYQKTGIFFENSKRYFVDKRLLQRIELTEHQSFRGYFTYLRFQASGEELQAVINALTVNETYFFREISQLESLVEEVLDDIVRHRPGELIRIWSMPCSSGEEPYSIVLFLLEHWPKLEQVDIEIIASDIDTGILQKAAQGIFSARSVKNLPNSSLNKYFSLRADGSYQLIDDIRQSVRFTQTNLNNRAEVQKLGAMDVIFCRNLLIYFDDISRRNAVESFYEQLNPGGVLFLGHSESMSRISSIFHVKRFRKSTGYYKPHKGKSDEKSNGR.

The CheR-type methyltransferase domain occupies 1 to 280 (MNEIVITDTD…TGYYKPHKGK (280 aa)). Residues N76, T78, R82, E119, D145, 200–201 (NL), and 219–220 (RN) each bind S-adenosyl-L-methionine.

It catalyses the reaction L-glutamyl-[protein] + S-adenosyl-L-methionine = [protein]-L-glutamate 5-O-methyl ester + S-adenosyl-L-homocysteine. Functionally, methylation of the membrane-bound methyl-accepting chemotaxis proteins (MCP) to form gamma-glutamyl methyl ester residues in MCP. The sequence is that of Chemotaxis protein methyltransferase 2 (cheR2) from Vibrio cholerae serotype O1 (strain ATCC 39315 / El Tor Inaba N16961).